A 193-amino-acid chain; its full sequence is 3-isopropylmalate dehydratase small subunit (193 aa).

Belongs to the LeuD family. LeuD type 1 subfamily. Heterodimer of LeuC and LeuD.

It carries out the reaction (2R,3S)-3-isopropylmalate = (2S)-2-isopropylmalate. The protein operates within amino-acid biosynthesis; L-leucine biosynthesis; L-leucine from 3-methyl-2-oxobutanoate: step 2/4. Functionally, catalyzes the isomerization between 2-isopropylmalate and 3-isopropylmalate, via the formation of 2-isopropylmaleate. The sequence is that of 3-isopropylmalate dehydratase small subunit from Listeria monocytogenes serovar 1/2a (strain ATCC BAA-679 / EGD-e).